Consider the following 713-residue polypeptide: BBSome complex assembly protein BBS10 (713 aa).

It belongs to the TCP-1 chaperonin family. Component of a complex composed at least of MKKS, BBS10, BBS12, TCP1, CCT2, CCT3, CCT4, CCT5 and CCT8.

Its subcellular location is the cell projection. The protein localises to the cilium. Functionally, probable molecular chaperone that assists the folding of proteins upon ATP hydrolysis. Plays a role in the assembly of BBSome, a complex involved in ciliogenesis regulating transports vesicles to the cilia. Involved in adipogenic differentiation. In Mus musculus (Mouse), this protein is BBSome complex assembly protein BBS10 (Bbs10).